Reading from the N-terminus, the 109-residue chain is Ig kappa chain V region S211 (109 aa).

The segment at 1–23 (DVQMTQSPSYLAASPGESVSISC) is framework-1. Residues 24-35 (KASNKSISNNLA) are complementarity-determining-1. The framework-2 stretch occupies residues 36-50 (WYZZKPGKANKLLIS). Residues 51–57 (SGSTLQS) form a complementarity-determining-2 region. The tract at residues 58–89 (GTPSRFSGSGSDTDFTLTIRSLEFQDFAVYYC) is framework-3. The segment at 90 to 98 (ZZYNEPYYT) is complementarity-determining-3. A framework-4 region spans residues 99 to 108 (FGAGTMLELK).

This chain is Ig kappa chain V region S211, found in Rattus norvegicus (Rat).